The following is a 554-amino-acid chain: Probable oligo-1,6-glucosidase 3 (554 aa).

The Nucleophile role is filled by D199. E256 acts as the Proton donor in catalysis.

Belongs to the glycosyl hydrolase 13 family.

It localises to the cytoplasm. The catalysed reaction is Hydrolysis of (1-&gt;6)-alpha-D-glucosidic linkages in some oligosaccharides produced from starch and glycogen by alpha-amylase, and in isomaltose.. The polypeptide is Probable oligo-1,6-glucosidase 3 (yugT) (Bacillus subtilis (strain 168)).